The chain runs to 311 residues: Small ribosomal subunit biogenesis GTPase RsgA (311 aa).

One can recognise a CP-type G domain in the interval Leu-77–Phe-239. Residues Asn-126–Asp-129 and Gly-180–Thr-188 each bind GTP. The Zn(2+) site is built by Cys-263, Cys-268, His-270, and Cys-276.

This sequence belongs to the TRAFAC class YlqF/YawG GTPase family. RsgA subfamily. As to quaternary structure, monomer. Associates with 30S ribosomal subunit, binds 16S rRNA. It depends on Zn(2+) as a cofactor.

The protein resides in the cytoplasm. Its function is as follows. One of several proteins that assist in the late maturation steps of the functional core of the 30S ribosomal subunit. Helps release RbfA from mature subunits. May play a role in the assembly of ribosomal proteins into the subunit. Circularly permuted GTPase that catalyzes slow GTP hydrolysis, GTPase activity is stimulated by the 30S ribosomal subunit. The protein is Small ribosomal subunit biogenesis GTPase RsgA of Azobacteroides pseudotrichonymphae genomovar. CFP2.